Reading from the N-terminus, the 149-residue chain is Large ribosomal subunit protein bL9 (149 aa).

The protein belongs to the bacterial ribosomal protein bL9 family.

Its function is as follows. Binds to the 23S rRNA. In Campylobacter curvus (strain 525.92), this protein is Large ribosomal subunit protein bL9.